The sequence spans 357 residues: Golgi to ER traffic protein 2 (357 aa).

Over 1–224 the chain is Cytoplasmic; it reads MSETTDKQLT…AKYHTYQEQL (224 aa). Over residues 65 to 81 the composition is skewed to low complexity; that stretch reads TDTATVTDSSTNATSVS. The segment at 65-99 is disordered; the sequence is TDTATVTDSSTNATSVSPSAAKATPTSTGVSSAIS. The segment covering 88 to 98 has biased composition (polar residues); that stretch reads TPTSTGVSSAI. The helical transmembrane segment at 225 to 245 threads the bilayer; the sequence is WQFRFLVVRILATIFNFAYHF. Residues 246-270 are Lumenal-facing; the sequence is ITIPSFTASNHAYVRDLSEVYPLLG. A helical transmembrane segment spans residues 271–290; the sequence is FMTIFTSIEVVIIATYYLLF. The Cytoplasmic segment spans residues 291-334; sequence TKLGLFHASNQKSFILKGISTLSMFVPQLLRYEPLVATFLGYKE. A helical transmembrane segment spans residues 335–355; it reads LLGIFVGDLSLVVVMFGLLSF. Residues 356–357 are Lumenal-facing; the sequence is SN.

It belongs to the GET2 family. Component of the Golgi to ER traffic (GET) complex, which is composed of GET1, GET2 and GET3. Within the complex, GET1 and GET2 form a heterotetramer which is stabilized by phosphatidylinositol binding and which binds to the GET3 homodimer.

It localises to the endoplasmic reticulum membrane. The protein localises to the golgi apparatus membrane. Its function is as follows. Required for the post-translational delivery of tail-anchored (TA) proteins to the endoplasmic reticulum. Together with GET1, acts as a membrane receptor for soluble GET3, which recognizes and selectively binds the transmembrane domain of TA proteins in the cytosol. The GET complex cooperates with the HDEL receptor ERD2 to mediate the ATP-dependent retrieval of resident ER proteins that contain a C-terminal H-D-E-L retention signal from the Golgi to the ER. This is Golgi to ER traffic protein 2 from Lodderomyces elongisporus (strain ATCC 11503 / CBS 2605 / JCM 1781 / NBRC 1676 / NRRL YB-4239) (Yeast).